The chain runs to 374 residues: UPF0754 membrane protein SAS1767 (374 aa).

The next 2 membrane-spanning stretches (helical) occupy residues 4–24 and 354–374; these read LFIIIFMIVVGAIIGGITNVI and SLGFILGGIIGFFQGLVAIFV.

The protein belongs to the UPF0754 family.

Its subcellular location is the cell membrane. The chain is UPF0754 membrane protein SAS1767 from Staphylococcus aureus (strain MSSA476).